Here is a 312-residue protein sequence, read N- to C-terminus: Dipeptide transport ATP-binding protein DppF (312 aa).

The ABC transporter domain occupies 10–255 (IKNLDLTFNK…PIHPYTKSLL (246 aa)). Position 45 to 52 (45 to 52 (GESGSGKT)) interacts with ATP.

The protein belongs to the ABC transporter superfamily. In terms of assembly, the complex is composed of two ATP-binding proteins (DppD and DppF), two transmembrane proteins (DppB and DppC) and a solute-binding protein (DppA).

The protein localises to the cell membrane. It carries out the reaction a dipeptide(out) + ATP + H2O = a dipeptide(in) + ADP + phosphate + H(+). Part of the ABC transporter DppABCDF involved in dipeptide transport. Responsible for energy coupling to the transport system. In Lactococcus lactis subsp. cremoris (strain MG1363), this protein is Dipeptide transport ATP-binding protein DppF.